The chain runs to 633 residues: Kinesin-like motor protein 9 (633 aa).

Positions 1–392 (MIQIFLRVKK…MRYSANAREI (392 aa)) constitute a Kinesin motor domain. ATP is bound at residue 94 to 101 (GVSGAGKT). Disordered regions lie at residues 393–423 (LPPPLNENSGSQSPSHSLLQKSKNTSSTKAL), 531–556 (LEEESIKESSATQQNENQHKRSSRKL), and 575–633 (KLWP…INEL). A compositionally biased stretch (polar residues) spans 398–423 (NENSGSQSPSHSLLQKSKNTSSTKAL). The stretch at 417–541 (TSSTKALTSH…EEESIKESSA (125 aa)) forms a coiled coil. Residues 578 to 587 (PQSTLIQAPN) are compositionally biased toward polar residues. The segment covering 604-623 (VSPIKPLSPSRRPPLTSLYS) has biased composition (low complexity). Phosphoserine is present on residues Ser605, Ser611, and Ser613. A compositionally biased stretch (polar residues) spans 624–633 (GTTDIDINEL).

Belongs to the TRAFAC class myosin-kinesin ATPase superfamily. Kinesin family. As to quaternary structure, interacts with ase1. Post-translationally, phosphorylated by cdc2 and dephosphorylated by clp1. Dephosphorylation is required for the interaction with ase1.

It is found in the nucleus. The protein localises to the cytoplasm. It localises to the cytoskeleton. The protein resides in the microtubule organizing center. Its subcellular location is the spindle pole body. Functionally, kinesin-like motor protein involved in anaphase B spindle elongation. The chain is Kinesin-like motor protein 9 (klp9) from Schizosaccharomyces pombe (strain 972 / ATCC 24843) (Fission yeast).